Reading from the N-terminus, the 449-residue chain is Neuraminidase (449 aa).

Topologically, residues 1-6 are intravirion; that stretch reads MNPNQK. A helical membrane pass occupies residues 7–27; that stretch reads IIAIGSICMVIGIVSLMLQIG. Positions 11–33 are involved in apical transport and lipid raft association; the sequence is GSICMVIGIVSLMLQIGNMISIW. Residues 28–449 lie on the Virion surface side of the membrane; it reads NMISIWISHS…GAELPFTIDK (422 aa). The interval 36–70 is hypervariable stalk region; the sequence is HSIQTGNQRQAEPISNTKVLNEKAVASVTLAGNSS. Asn-68 is a glycosylation site (N-linked (GlcNAc...) asparagine; by host). The segment at 71–449 is head of neuraminidase; sequence LCPISGWAVH…GAELPFTIDK (379 aa). Cystine bridges form between Cys-72-Cys-397, Cys-104-Cys-109, Cys-164-Cys-211, Cys-213-Cys-218, Cys-259-Cys-272, Cys-261-Cys-270, Cys-298-Cys-315, and Cys-401-Cys-426. Arg-98 contributes to the substrate binding site. Residue Asn-126 is glycosylated (N-linked (GlcNAc...) asparagine; by host). Asp-131 serves as the catalytic Proton donor/acceptor. Arg-132 is a substrate binding site. An N-linked (GlcNAc...) asparagine; by host glycan is attached at Asn-215. 257 to 258 serves as a coordination point for substrate; the sequence is EE. Arg-273 contacts substrate. Ca(2+) is bound by residues Asp-274, Gly-278, and Asp-304. Residue Arg-348 participates in substrate binding. The active-site Nucleophile is Tyr-382.

This sequence belongs to the glycosyl hydrolase 34 family. As to quaternary structure, homotetramer. Ca(2+) is required as a cofactor. In terms of processing, N-glycosylated.

It is found in the virion membrane. It localises to the host apical cell membrane. The catalysed reaction is Hydrolysis of alpha-(2-&gt;3)-, alpha-(2-&gt;6)-, alpha-(2-&gt;8)- glycosidic linkages of terminal sialic acid residues in oligosaccharides, glycoproteins, glycolipids, colominic acid and synthetic substrates.. Inhibited by the neuraminidase inhibitors zanamivir (Relenza) and oseltamivir (Tamiflu). These drugs interfere with the release of progeny virus from infected cells and are effective against all influenza strains. Resistance to neuraminidase inhibitors is quite rare. Functionally, catalyzes the removal of terminal sialic acid residues from viral and cellular glycoconjugates. Cleaves off the terminal sialic acids on the glycosylated HA during virus budding to facilitate virus release. Additionally helps virus spread through the circulation by further removing sialic acids from the cell surface. These cleavages prevent self-aggregation and ensure the efficient spread of the progeny virus from cell to cell. Otherwise, infection would be limited to one round of replication. Described as a receptor-destroying enzyme because it cleaves a terminal sialic acid from the cellular receptors. May facilitate viral invasion of the upper airways by cleaving the sialic acid moieties on the mucin of the airway epithelial cells. Likely to plays a role in the budding process through its association with lipid rafts during intracellular transport. May additionally display a raft-association independent effect on budding. Plays a role in the determination of host range restriction on replication and virulence. Sialidase activity in late endosome/lysosome traffic seems to enhance virus replication. This chain is Neuraminidase, found in Aves (Cat).